The primary structure comprises 431 residues: Glutamate-1-semialdehyde 2,1-aminomutase 1 (431 aa).

Position 268 is an N6-(pyridoxal phosphate)lysine (K268).

The protein belongs to the class-III pyridoxal-phosphate-dependent aminotransferase family. HemL subfamily. As to quaternary structure, homodimer. Pyridoxal 5'-phosphate serves as cofactor.

It localises to the cytoplasm. It carries out the reaction (S)-4-amino-5-oxopentanoate = 5-aminolevulinate. The protein operates within porphyrin-containing compound metabolism; protoporphyrin-IX biosynthesis; 5-aminolevulinate from L-glutamyl-tRNA(Glu): step 2/2. This is Glutamate-1-semialdehyde 2,1-aminomutase 1 from Bacillus pumilus (strain SAFR-032).